The sequence spans 324 residues: Phospho-N-acetylmuramoyl-pentapeptide-transferase (324 aa).

10 consecutive transmembrane segments (helical) span residues 5–25, 52–72, 77–97, 117–137, 147–167, 176–196, 203–223, 227–247, 250–270, and 302–322; these read VILF…PIFI, PTMG…VMTM, VSMN…LGFL, LIGQ…QGMP, LSFD…VGGS, LDGL…ILAW, VAIF…FNAH, VFMG…IAIL, LEIL…SVIL, and VVVT…YIEV.

This sequence belongs to the glycosyltransferase 4 family. MraY subfamily. It depends on Mg(2+) as a cofactor.

The protein resides in the cell membrane. The enzyme catalyses UDP-N-acetyl-alpha-D-muramoyl-L-alanyl-gamma-D-glutamyl-meso-2,6-diaminopimeloyl-D-alanyl-D-alanine + di-trans,octa-cis-undecaprenyl phosphate = di-trans,octa-cis-undecaprenyl diphospho-N-acetyl-alpha-D-muramoyl-L-alanyl-D-glutamyl-meso-2,6-diaminopimeloyl-D-alanyl-D-alanine + UMP. It functions in the pathway cell wall biogenesis; peptidoglycan biosynthesis. Its function is as follows. Catalyzes the initial step of the lipid cycle reactions in the biosynthesis of the cell wall peptidoglycan: transfers peptidoglycan precursor phospho-MurNAc-pentapeptide from UDP-MurNAc-pentapeptide onto the lipid carrier undecaprenyl phosphate, yielding undecaprenyl-pyrophosphoryl-MurNAc-pentapeptide, known as lipid I. The polypeptide is Phospho-N-acetylmuramoyl-pentapeptide-transferase (Bacillus licheniformis (strain ATCC 14580 / DSM 13 / JCM 2505 / CCUG 7422 / NBRC 12200 / NCIMB 9375 / NCTC 10341 / NRRL NRS-1264 / Gibson 46)).